We begin with the raw amino-acid sequence, 642 residues long: 1-deoxy-D-xylulose-5-phosphate synthase 2 (642 aa).

Thiamine diphosphate contacts are provided by residues His-73 and 113-115 (SHA). Asp-144 is a binding site for Mg(2+). Thiamine diphosphate-binding positions include 145–146 (GA), Asn-174, Tyr-285, and Glu-366. Asn-174 is a binding site for Mg(2+).

Belongs to the transketolase family. DXPS subfamily. Homodimer. Mg(2+) is required as a cofactor. The cofactor is thiamine diphosphate.

It carries out the reaction D-glyceraldehyde 3-phosphate + pyruvate + H(+) = 1-deoxy-D-xylulose 5-phosphate + CO2. It participates in metabolic intermediate biosynthesis; 1-deoxy-D-xylulose 5-phosphate biosynthesis; 1-deoxy-D-xylulose 5-phosphate from D-glyceraldehyde 3-phosphate and pyruvate: step 1/1. In terms of biological role, catalyzes the acyloin condensation reaction between C atoms 2 and 3 of pyruvate and glyceraldehyde 3-phosphate to yield 1-deoxy-D-xylulose-5-phosphate (DXP). This is 1-deoxy-D-xylulose-5-phosphate synthase 2 from Streptomyces coelicolor (strain ATCC BAA-471 / A3(2) / M145).